Reading from the N-terminus, the 171-residue chain is Shikimate kinase (171 aa).

An ATP-binding site is contributed by G13–T18. Mg(2+) is bound at residue S17. Substrate contacts are provided by D35, R59, and G81. An ATP-binding site is contributed by R118. R136 contributes to the substrate binding site. Position 153 (R153) interacts with ATP.

It belongs to the shikimate kinase family. As to quaternary structure, monomer. Requires Mg(2+) as cofactor.

It is found in the cytoplasm. It catalyses the reaction shikimate + ATP = 3-phosphoshikimate + ADP + H(+). The protein operates within metabolic intermediate biosynthesis; chorismate biosynthesis; chorismate from D-erythrose 4-phosphate and phosphoenolpyruvate: step 5/7. Its function is as follows. Catalyzes the specific phosphorylation of the 3-hydroxyl group of shikimic acid using ATP as a cosubstrate. This chain is Shikimate kinase, found in Streptomyces avermitilis (strain ATCC 31267 / DSM 46492 / JCM 5070 / NBRC 14893 / NCIMB 12804 / NRRL 8165 / MA-4680).